Consider the following 840-residue polypeptide: Wings apart-like protein 2 (840 aa).

3 disordered regions span residues 1 to 37 (MMER…EPVD), 56 to 78 (SDND…FGSN), and 532 to 594 (FDLE…DHHV). A compositionally biased stretch (basic residues) spans 546 to 557 (KQKKSKGQKRKG). Basic and acidic residues predominate over residues 558-567 (SYRDKKDERS). Polar residues predominate over residues 569–585 (QLFSSQEESNHGLNSQE). Residues 764–819 (KEAEKMIVEAYSALLLAFLSTESRSIRNAIRDYLPKRDMAILVPVLDRFVAFHTTL) form the WAPL domain.

The protein belongs to the WAPL family. Interacts with the cohesin complex throughout the cell cycle. As to expression, expressed in roots, leaves, buds and siliques.

The protein resides in the nucleus. The protein localises to the chromosome. In terms of biological role, regulator of sister chromatid cohesion in meiosis which negatively regulates cohesin association with chromatin, acting as an antagonist of CTF7. Cohesion ensures that chromosome partitioning is accurate in both meiotic and mitotic cells and plays an important role in DNA repair. Essential for the prophase removal of cohesin during meiosis thus determining the timely release of meiotic cohesion. Important for proper spindle attachment and assembly during meiosis. Helps to prevent abnormal centromere association during prophase I in meiocytes. Required for early embryonic patterning. Also involved in chromosome segregation during mitosis. The protein is Wings apart-like protein 2 of Arabidopsis thaliana (Mouse-ear cress).